A 327-amino-acid polypeptide reads, in one-letter code: Lactosylceramide 4-alpha-galactosyltransferase (327 aa).

The short motif at 166 to 168 (DTD) is the DXD motif element.

The protein belongs to the glycosyltransferase 32 family.

Its subcellular location is the golgi apparatus membrane. The enzyme catalyses a beta-D-Gal-(1-&gt;4)-beta-D-Glc-(1&lt;-&gt;1)-Cer(d18:1(4E)) + UDP-alpha-D-galactose = a globoside Gb3Cer (d18:1(4E)) + UDP + H(+). It carries out the reaction a beta-D-Gal-(1&lt;-&gt;1')-ceramide + UDP-alpha-D-galactose = alpha-D-Gal-(1-&gt;4)-beta-D-Gal-(1&lt;-&gt;1')-Cer + UDP + H(+). The protein operates within glycolipid biosynthesis. Catalyzes the transfer of galactose from UDP-alpha-D-galactose to lactosylceramide/beta-D-galactosyl-(1-&gt;4)-beta-D-glucosyl-(1&lt;-&gt;1)-ceramide(d18:1(4E)) to produce globotriaosylceramide/globoside Gb3Cer (d18:1(4E)). Also able to transfer galactose to galactosylceramide/beta-D-Gal-(1&lt;-&gt;1')-Cer. Globoside Gb3Cer is a glycosphingolipid of the globo serie, one of the major types of neutral root structures of glycosphingolipids, that constitute a significant portion of mammalian cell membranes. The polypeptide is Lactosylceramide 4-alpha-galactosyltransferase (A4GALT) (Gorilla gorilla gorilla (Western lowland gorilla)).